Consider the following 488-residue polypeptide: Diacylglycerol kinase 3 (488 aa).

The segment at 1 to 24 (MDSPVSKTDASKEKFVASRPSTAD) is disordered. The region spanning 87-245 (APHAPMVVFI…SWKILVSMPS (159 aa)) is the DAGKc domain.

The protein belongs to the eukaryotic diacylglycerol kinase family. In terms of assembly, monomer.

It catalyses the reaction a 1,2-diacyl-sn-glycerol + ATP = a 1,2-diacyl-sn-glycero-3-phosphate + ADP + H(+). Phosphorylates the second messenger diacylglycerol (DAG) to generate phosphatidic acid (PA), another important signaling molecule. PA is required for plant development and responses to abiotic stress and pathogen attack. May be involved in the accumulation of PA during cold stress. This chain is Diacylglycerol kinase 3 (DGK3), found in Arabidopsis thaliana (Mouse-ear cress).